Here is a 503-residue protein sequence, read N- to C-terminus: Cobyric acid synthase (503 aa).

In terms of domain architecture, GATase cobBQ-type spans 245–447 (DISIAIIRLP…LHGIFDEISL (203 aa)). Residue Cys-326 is the Nucleophile of the active site. Residue His-439 is part of the active site.

This sequence belongs to the CobB/CobQ family. CobQ subfamily.

Its pathway is cofactor biosynthesis; adenosylcobalamin biosynthesis. In terms of biological role, catalyzes amidations at positions B, D, E, and G on adenosylcobyrinic A,C-diamide. NH(2) groups are provided by glutamine, and one molecule of ATP is hydrogenolyzed for each amidation. This chain is Cobyric acid synthase, found in Alkaliphilus metalliredigens (strain QYMF).